The sequence spans 229 residues: MLKTVLRLPVCAALLALAAGCAMIPPEPVVICPLTAPPPSPPQPSARPNGSIYQPSAYGNYPLFEDRRPRNVGDIVTIVLEEKTNAAKGVATNTSRDGSATLGVAAAPRFMDGIINDKLDTDISGGNTANGTGKSSANNTFTGTITTTVIGVLPNGNLQIAGEKQIAINRGSEYVRFSGVVDPRSITGSNTVSSTRVADARIEYRSKGVMDEVQTMGWLQRFFLIASPF.

Residues 1 to 20 (MLKTVLRLPVCAALLALAAG) form the signal peptide. Residue C21 is the site of N-palmitoyl cysteine attachment. C21 is lipidated: S-diacylglycerol cysteine.

Belongs to the FlgH family. In terms of assembly, the basal body constitutes a major portion of the flagellar organelle and consists of four rings (L,P,S, and M) mounted on a central rod.

The protein resides in the cell outer membrane. The protein localises to the bacterial flagellum basal body. Assembles around the rod to form the L-ring and probably protects the motor/basal body from shearing forces during rotation. The sequence is that of Flagellar L-ring protein from Bordetella pertussis (strain Tohama I / ATCC BAA-589 / NCTC 13251).